The sequence spans 66 residues: Large ribosomal subunit protein bL31 (66 aa).

Zn(2+) is bound by residues cysteine 16, cysteine 18, cysteine 36, and cysteine 39.

This sequence belongs to the bacterial ribosomal protein bL31 family. Type A subfamily. As to quaternary structure, part of the 50S ribosomal subunit. Requires Zn(2+) as cofactor.

Binds the 23S rRNA. This Geobacillus kaustophilus (strain HTA426) protein is Large ribosomal subunit protein bL31.